Here is a 173-residue protein sequence, read N- to C-terminus: Translation initiation factor IF-3 (173 aa).

The protein belongs to the IF-3 family. As to quaternary structure, monomer.

It is found in the cytoplasm. In terms of biological role, IF-3 binds to the 30S ribosomal subunit and shifts the equilibrium between 70S ribosomes and their 50S and 30S subunits in favor of the free subunits, thus enhancing the availability of 30S subunits on which protein synthesis initiation begins. The polypeptide is Translation initiation factor IF-3 (Bartonella bacilliformis (strain ATCC 35685 / KC583 / Herrer 020/F12,63)).